The following is a 595-amino-acid chain: MYYTEESLETLKHSIDIVSVLGEYVHLKRSGADYKACCPFHDEKTPSFIVYPTRGHYHCYGCGEHGDAINFLMKQQGYSFSEAVLFLAKKFHVDLVVRTKETSGQDSKDSLRRINREAERFFQYCLLHLPEGEEALAYLYKRGFSPDTIDRFQIGYAPEQRLFIQAMEERNISVKQLEWAGYLAKDWFLFAQRIMFPIQDALGYTIGFSSRRFKEGGRGGKYINSPETILFKKSRVLYGLQFSRKRIAKERRVILVEGQADCLQMIDFGFNCTLAAQGTSFTETHVHELVKLGVSKAYLLFDGDAAGEKASLRVGDLCQAAGITAIVCRLPSGQDPDSFLMQRGPEELRELLDRGEDYLSFLVWHKIHSYEQFTPREKARVIEEVIQQVRCWGSPITIHEYLRQLASLVKVPEPAVLSYLSSITSAAEDKGKKVSAKEPSSESKQTSTEGKISKKISPRMILEADVIRCLLFAKPEDEFVPATVKQYLSPEEFHCAEYRAIFVMAMNHYNDRQTLPSMDEMMSLVVGTEAMTLLVARRMNTELMRDIVVQSIQKLLDKHWRDKKRKLCHQTGKGLDSLQEYVRLSGERVKVSLVS.

The segment at cysteine 38–cysteine 62 adopts a CHC2-type zinc-finger fold. Residues arginine 251 to proline 331 form the Toprim domain. Mg(2+) is bound by residues glutamate 257, aspartate 302, and aspartate 304. Residues lysine 430–serine 441 show a composition bias toward basic and acidic residues. The tract at residues lysine 430–lysine 451 is disordered.

It belongs to the DnaG primase family. As to quaternary structure, monomer. Interacts with DnaB. Zn(2+) is required as a cofactor. The cofactor is Mg(2+).

It carries out the reaction ssDNA + n NTP = ssDNA/pppN(pN)n-1 hybrid + (n-1) diphosphate.. In terms of biological role, RNA polymerase that catalyzes the synthesis of short RNA molecules used as primers for DNA polymerase during DNA replication. This is DNA primase from Chlamydia trachomatis serovar D (strain ATCC VR-885 / DSM 19411 / UW-3/Cx).